Reading from the N-terminus, the 345-residue chain is Anthranilate phosphoribosyltransferase (345 aa).

5-phospho-alpha-D-ribose 1-diphosphate-binding positions include Gly79, 82–83 (GD), Thr87, 89–92 (NVST), 106–114 (KHGNRAVSG), and Ser118. Gly79 is an anthranilate binding site. Ser91 serves as a coordination point for Mg(2+). Position 109 (Asn109) interacts with anthranilate. Arg164 is an anthranilate binding site. Mg(2+) is bound by residues Asp223 and Glu224.

The protein belongs to the anthranilate phosphoribosyltransferase family. As to quaternary structure, homodimer. Requires Mg(2+) as cofactor.

It catalyses the reaction N-(5-phospho-beta-D-ribosyl)anthranilate + diphosphate = 5-phospho-alpha-D-ribose 1-diphosphate + anthranilate. Its pathway is amino-acid biosynthesis; L-tryptophan biosynthesis; L-tryptophan from chorismate: step 2/5. Its function is as follows. Catalyzes the transfer of the phosphoribosyl group of 5-phosphorylribose-1-pyrophosphate (PRPP) to anthranilate to yield N-(5'-phosphoribosyl)-anthranilate (PRA). This Saccharolobus islandicus (strain M.14.25 / Kamchatka #1) (Sulfolobus islandicus) protein is Anthranilate phosphoribosyltransferase.